A 315-amino-acid chain; its full sequence is UDP-3-O-acyl-N-acetylglucosamine deacetylase (315 aa).

Zn(2+) is bound by residues histidine 78, histidine 235, and aspartate 239. The Proton donor role is filled by histidine 262.

It belongs to the LpxC family. Zn(2+) is required as a cofactor.

The enzyme catalyses a UDP-3-O-[(3R)-3-hydroxyacyl]-N-acetyl-alpha-D-glucosamine + H2O = a UDP-3-O-[(3R)-3-hydroxyacyl]-alpha-D-glucosamine + acetate. It functions in the pathway glycolipid biosynthesis; lipid IV(A) biosynthesis; lipid IV(A) from (3R)-3-hydroxytetradecanoyl-[acyl-carrier-protein] and UDP-N-acetyl-alpha-D-glucosamine: step 2/6. In terms of biological role, catalyzes the hydrolysis of UDP-3-O-myristoyl-N-acetylglucosamine to form UDP-3-O-myristoylglucosamine and acetate, the committed step in lipid A biosynthesis. The polypeptide is UDP-3-O-acyl-N-acetylglucosamine deacetylase (Syntrophus aciditrophicus (strain SB)).